Consider the following 437-residue polypeptide: Glutamate-1-semialdehyde 2,1-aminomutase (437 aa).

Lys274 is subject to N6-(pyridoxal phosphate)lysine.

It belongs to the class-III pyridoxal-phosphate-dependent aminotransferase family. HemL subfamily. As to quaternary structure, homodimer. Pyridoxal 5'-phosphate is required as a cofactor.

It is found in the cytoplasm. The enzyme catalyses (S)-4-amino-5-oxopentanoate = 5-aminolevulinate. It participates in porphyrin-containing compound metabolism; protoporphyrin-IX biosynthesis; 5-aminolevulinate from L-glutamyl-tRNA(Glu): step 2/2. This is Glutamate-1-semialdehyde 2,1-aminomutase from Leptothrix cholodnii (strain ATCC 51168 / LMG 8142 / SP-6) (Leptothrix discophora (strain SP-6)).